The following is a 215-amino-acid chain: 3-isopropylmalate dehydratase small subunit (215 aa).

The protein belongs to the LeuD family. LeuD type 1 subfamily. Heterodimer of LeuC and LeuD.

The catalysed reaction is (2R,3S)-3-isopropylmalate = (2S)-2-isopropylmalate. The protein operates within amino-acid biosynthesis; L-leucine biosynthesis; L-leucine from 3-methyl-2-oxobutanoate: step 2/4. Functionally, catalyzes the isomerization between 2-isopropylmalate and 3-isopropylmalate, via the formation of 2-isopropylmaleate. This Polynucleobacter asymbioticus (strain DSM 18221 / CIP 109841 / QLW-P1DMWA-1) (Polynucleobacter necessarius subsp. asymbioticus) protein is 3-isopropylmalate dehydratase small subunit.